Here is a 1487-residue protein sequence, read N- to C-terminus: Chromosome partition protein MukB (1487 aa).

Residue 34 to 41 coordinates ATP; that stretch reads GGNGAGKS. 5 coiled-coil regions span residues 297 to 426, 460 to 666, 781 to 806, 836 to 1111, and 1210 to 1266; these read SSRE…LEKA, ALKH…RLAS, RAAR…AKAA, EQAL…RTFV, and VEAI…LSNI. Positions 667-784 are flexible hinge; it reads PGGSNDPRLK…VIPLFGRAAR (118 aa).

The protein belongs to the SMC family. MukB subfamily. Homodimerization via its hinge domain. Binds to DNA via its C-terminal region. Interacts, and probably forms a ternary complex, with MukE and MukF via its C-terminal region. The complex formation is stimulated by calcium or magnesium. Interacts with tubulin-related protein FtsZ.

The protein localises to the cytoplasm. Its subcellular location is the nucleoid. Functionally, plays a central role in chromosome condensation, segregation and cell cycle progression. Functions as a homodimer, which is essential for chromosome partition. Involved in negative DNA supercoiling in vivo, and by this means organize and compact chromosomes. May achieve or facilitate chromosome segregation by condensation DNA from both sides of a centrally located replisome during cell division. The polypeptide is Chromosome partition protein MukB (Vibrio vulnificus (strain CMCP6)).